A 309-amino-acid chain; its full sequence is MDIQFLGTGAGQPSKARNVSSLALKLLDEINEVWLFDCGEGTQNRILETTIRPRKVSKIFITHLHGDHIFGLPGFLSSRAFQANEEQTDLEIYGPQGIKSFVLTSLRVSGSRLPYRIHFHEFDQDSLGKILETDKFTVYAEELDHTIFCVGYRVMQKDLEGTLDAEKLKAAGVPFGPLFGKIKNGQDLVLEDGTEIKAADYISAPRPGKIITILGDTRKTGASVRLAVNADVLVHESTYGKGDEKIARNHGHSTNMQAAQVAVEAGAKRLLLNHISARFLSKDISKLKKDAATIFENVHVVKDLEEVEI.

Positions 63, 65, 67, 68, 145, 216, and 274 each coordinate Zn(2+). Aspartate 67 functions as the Proton acceptor in the catalytic mechanism.

Belongs to the RNase Z family. As to quaternary structure, homodimer. Requires Zn(2+) as cofactor.

The catalysed reaction is Endonucleolytic cleavage of RNA, removing extra 3' nucleotides from tRNA precursor, generating 3' termini of tRNAs. A 3'-hydroxy group is left at the tRNA terminus and a 5'-phosphoryl group is left at the trailer molecule.. Zinc phosphodiesterase, which displays some tRNA 3'-processing endonuclease activity. Probably involved in tRNA maturation, by removing a 3'-trailer from precursor tRNA. This chain is Ribonuclease Z, found in Streptococcus pneumoniae serotype 2 (strain D39 / NCTC 7466).